The sequence spans 297 residues: Protoheme IX farnesyltransferase 1 (297 aa).

9 helical membrane-spanning segments follow: residues 23-43 (VVVL…RAGV), 45-65 (WSVL…AAVV), 93-113 (LPAL…LLVF), 117-137 (LTAW…TGFL), 145-165 (IVIG…AVSG), 171-191 (PLLL…ALAI), 216-236 (LHIL…YAIH), 241-261 (LYLV…WVLY), and 277-297 (IGYL…LLNL).

It belongs to the UbiA prenyltransferase family. Protoheme IX farnesyltransferase subfamily.

It is found in the cell inner membrane. It catalyses the reaction heme b + (2E,6E)-farnesyl diphosphate + H2O = Fe(II)-heme o + diphosphate. Its pathway is porphyrin-containing compound metabolism; heme O biosynthesis; heme O from protoheme: step 1/1. Its function is as follows. Converts heme B (protoheme IX) to heme O by substitution of the vinyl group on carbon 2 of heme B porphyrin ring with a hydroxyethyl farnesyl side group. The polypeptide is Protoheme IX farnesyltransferase 1 (Pseudomonas putida (strain ATCC 47054 / DSM 6125 / CFBP 8728 / NCIMB 11950 / KT2440)).